The chain runs to 233 residues: Protein YIPF6 (233 aa).

The Cytoplasmic portion of the chain corresponds to 1–84 (MAETEGFGDS…PKKSTTLLRD (84 aa)). Residues 85 to 105 (WDLWGPLVLCVSLALMLQGGN) form a helical membrane-spanning segment. Residues 106–111 (ADSKDD) are Lumenal-facing. Residues 112–132 (GGPQFAEVFVIIWFGAVVITL) traverse the membrane as a helical segment. Residues 133-142 (NSKLLGGTIS) lie on the Cytoplasmic side of the membrane. A helical transmembrane segment spans residues 143-163 (FFQSLCVLGYCILPLTVAMLV). Residues 164–180 (CRLVLLLSHTTASFIVR) lie on the Lumenal side of the membrane. The chain crosses the membrane as a helical span at residues 181–201 (LVVVTVMFAWSTFASTAFLAD). Over 202 to 208 (SQPPNRR) the chain is Cytoplasmic. A helical membrane pass occupies residues 209-229 (ALAVYPIFLFYFVISWMVLTF). Residues 230-233 (NTVS) are Lumenal-facing.

The protein belongs to the YIP1 family.

The protein localises to the golgi apparatus membrane. This chain is Protein YIPF6 (yipf6), found in Xenopus tropicalis (Western clawed frog).